Here is a 309-residue protein sequence, read N- to C-terminus: tRNA dimethylallyltransferase (309 aa).

ATP is bound at residue 13-20; it reads GPTAVGKS. Substrate is bound at residue 15 to 20; that stretch reads TAVGKS.

Belongs to the IPP transferase family. Monomer. Mg(2+) is required as a cofactor.

It catalyses the reaction adenosine(37) in tRNA + dimethylallyl diphosphate = N(6)-dimethylallyladenosine(37) in tRNA + diphosphate. Functionally, catalyzes the transfer of a dimethylallyl group onto the adenine at position 37 in tRNAs that read codons beginning with uridine, leading to the formation of N6-(dimethylallyl)adenosine (i(6)A). This is tRNA dimethylallyltransferase from Lacticaseibacillus casei (strain BL23) (Lactobacillus casei).